Here is a 204-residue protein sequence, read N- to C-terminus: Large ribosomal subunit protein eL15z (204 aa).

The protein belongs to the eukaryotic ribosomal protein eL15 family.

This chain is Large ribosomal subunit protein eL15z (SB61), found in Picea mariana (Black spruce).